A 695-amino-acid chain; its full sequence is Cysteine-rich receptor-like protein kinase 6 (695 aa).

The signal sequence occupies residues 1–31 (MRRHRPYLDGVAAAAATFLLAVLLHAPLAAG). The Extracellular portion of the chain corresponds to 32 to 294 (EDEPPPWVLC…ATSGEKTKNR (263 aa)). 2 consecutive Gnk2-homologous domains span residues 38–142 (WVLC…NRDF) and 151–261 (TTYT…VFPF). N-linked (GlcNAc...) asparagine glycans are attached at residues Asn-49, Asn-53, Asn-70, and Asn-101. 2 cysteine pairs are disulfide-bonded: Cys-96–Cys-105 and Cys-108–Cys-133. A glycan (N-linked (GlcNAc...) asparagine) is linked at Asn-178. 2 disulfides stabilise this stretch: Cys-215/Cys-224 and Cys-227/Cys-252. A helical membrane pass occupies residues 295–315 (IGTVLAIVMPAIAAILLMVVA). At 316–695 (CFCCWKRIKK…DLSITELVPR (380 aa)) the chain is on the cytoplasmic side. The Protein kinase domain occupies 363–634 (FADTKMIGQG…PTISSVNIML (272 aa)). ATP is bound by residues 369–377 (IGQGGFGMV) and Lys-391. The active-site Proton acceptor is Asp-488. The segment at 658 to 682 (DSSNPYSERYPRPRHSGYSDNSTVV) is disordered.

Belongs to the protein kinase superfamily. Ser/Thr protein kinase family. CRK subfamily.

The protein localises to the membrane. In terms of biological role, involved in disease resistance. Required for NPR1/NH1-mediated immunity to the bacterial blight pathogen Xanthomomas oryzae pv. oryzae (Xoo). Required for the benzothiadiazole (BTH)-induced immune response. Possesses kinase activity in vitro. The polypeptide is Cysteine-rich receptor-like protein kinase 6 (Oryza sativa subsp. japonica (Rice)).